A 211-amino-acid polypeptide reads, in one-letter code: Dual specificity protein phosphatase 26 (211 aa).

The Tyrosine-protein phosphatase domain maps to 60-207 (NHADEVWPGL…LLALDRRLRQ (148 aa)). C152 acts as the Phosphocysteine intermediate in catalysis.

The protein belongs to the protein-tyrosine phosphatase family. Non-receptor class dual specificity subfamily. Interacts with HSF4. Brain. In the brain it is expressed ubiquitously except in the hippocampus. Expressed in embryonal cancers (retinoblastoma, neuroepithilioma and neuroblastoma) and in anaplatic thyroid cancer.

The protein resides in the cytoplasm. The protein localises to the nucleus. It localises to the golgi apparatus. The catalysed reaction is O-phospho-L-tyrosyl-[protein] + H2O = L-tyrosyl-[protein] + phosphate. It carries out the reaction O-phospho-L-seryl-[protein] + H2O = L-seryl-[protein] + phosphate. The enzyme catalyses O-phospho-L-threonyl-[protein] + H2O = L-threonyl-[protein] + phosphate. In terms of biological role, inactivates MAPK1 and MAPK3 which leads to dephosphorylation of heat shock factor protein 4 and a reduction in its DNA-binding activity. Inhibits MAP kinase p38 by dephosphorylating it and inhibits p38-mediated apoptosis in anaplastic thyroid cancer cells. Can also induce activation of MAP kinase p38 and c-Jun N-terminal kinase (JNK). The protein is Dual specificity protein phosphatase 26 (DUSP26) of Homo sapiens (Human).